The sequence spans 94 residues: Aspartyl/glutamyl-tRNA(Asn/Gln) amidotransferase subunit C (94 aa).

Belongs to the GatC family. Heterotrimer of A, B and C subunits.

It catalyses the reaction L-glutamyl-tRNA(Gln) + L-glutamine + ATP + H2O = L-glutaminyl-tRNA(Gln) + L-glutamate + ADP + phosphate + H(+). The catalysed reaction is L-aspartyl-tRNA(Asn) + L-glutamine + ATP + H2O = L-asparaginyl-tRNA(Asn) + L-glutamate + ADP + phosphate + 2 H(+). In terms of biological role, allows the formation of correctly charged Asn-tRNA(Asn) or Gln-tRNA(Gln) through the transamidation of misacylated Asp-tRNA(Asn) or Glu-tRNA(Gln) in organisms which lack either or both of asparaginyl-tRNA or glutaminyl-tRNA synthetases. The reaction takes place in the presence of glutamine and ATP through an activated phospho-Asp-tRNA(Asn) or phospho-Glu-tRNA(Gln). The protein is Aspartyl/glutamyl-tRNA(Asn/Gln) amidotransferase subunit C of Nitratidesulfovibrio vulgaris (strain ATCC 29579 / DSM 644 / CCUG 34227 / NCIMB 8303 / VKM B-1760 / Hildenborough) (Desulfovibrio vulgaris).